The primary structure comprises 287 residues: Bifunctional protein FolD (287 aa).

Residues 165–167 (GRG), Thr190, and Ile231 each bind NADP(+).

Belongs to the tetrahydrofolate dehydrogenase/cyclohydrolase family. Homodimer.

It catalyses the reaction (6R)-5,10-methylene-5,6,7,8-tetrahydrofolate + NADP(+) = (6R)-5,10-methenyltetrahydrofolate + NADPH. The enzyme catalyses (6R)-5,10-methenyltetrahydrofolate + H2O = (6R)-10-formyltetrahydrofolate + H(+). Its pathway is one-carbon metabolism; tetrahydrofolate interconversion. Its function is as follows. Catalyzes the oxidation of 5,10-methylenetetrahydrofolate to 5,10-methenyltetrahydrofolate and then the hydrolysis of 5,10-methenyltetrahydrofolate to 10-formyltetrahydrofolate. The sequence is that of Bifunctional protein FolD from Heliobacterium modesticaldum (strain ATCC 51547 / Ice1).